Reading from the N-terminus, the 151-residue chain is Urease accessory protein UreE (151 aa).

It belongs to the UreE family.

It localises to the cytoplasm. In terms of biological role, involved in urease metallocenter assembly. Binds nickel. Probably functions as a nickel donor during metallocenter assembly. The chain is Urease accessory protein UreE from Bacillus cereus (strain ATCC 10987 / NRS 248).